The primary structure comprises 509 residues: Sulfoacetate--CoA ligase (509 aa).

The segment at 320–340 (AFSNPLDPGQRRIGSIGRPSG) is disordered.

Belongs to the ATP-dependent AMP-binding enzyme family.

The protein localises to the cytoplasm. It catalyses the reaction sulfoacetate + ATP + CoA = sulfoacetyl-CoA + AMP + diphosphate. Involved in the degradation of sulfoacetate, a widespread natural product. Catalyzes the CoA- and ATP-dependent conversion of sulfoacetate to sulfoacetyl-CoA and AMP. This is Sulfoacetate--CoA ligase from Cupriavidus necator (strain ATCC 17699 / DSM 428 / KCTC 22496 / NCIMB 10442 / H16 / Stanier 337) (Ralstonia eutropha).